The chain runs to 114 residues: Fluoride-specific ion channel FluC 2 (114 aa).

A run of 4 helical transmembrane segments spans residues 3 to 23 (YVII…ECWL), 31 to 51 (LMTA…WILA), 57 to 77 (GIEL…TFCM), and 92 to 112 (MIYL…GWNV). Residues Gly-67 and Thr-70 each coordinate Na(+).

This sequence belongs to the fluoride channel Fluc/FEX (TC 1.A.43) family.

It is found in the cell membrane. The enzyme catalyses fluoride(in) = fluoride(out). Na(+) is not transported, but it plays an essential structural role and its presence is essential for fluoride channel function. Functionally, fluoride-specific ion channel. Important for reducing fluoride concentration in the cell, thus reducing its toxicity. This chain is Fluoride-specific ion channel FluC 2, found in Shouchella clausii (strain KSM-K16) (Alkalihalobacillus clausii).